The primary structure comprises 83 residues: MLRNLLALRQIAKRTISTSSRRQFENKVPEKQKLFQEDNGIPVHLKGGIADALLYRATLILTVGGTAYAMYELAVASFPKKQD.

A mitochondrion-targeting transit peptide spans Met-1–Gln-23. Residues Phe-24 to Gly-48 are Mitochondrial matrix-facing. Position 33 is an N6-acetyllysine (Lys-33). A helical transmembrane segment spans residues Ile-49 to Ser-77. Over Phe-78–Asp-83 the chain is Mitochondrial intermembrane.

The protein belongs to the cytochrome c oxidase VIIa family. In terms of assembly, component of the cytochrome c oxidase (complex IV, CIV), a multisubunit enzyme composed of 14 subunits. The complex is composed of a catalytic core of 3 subunits MT-CO1, MT-CO2 and MT-CO3, encoded in the mitochondrial DNA, and 11 supernumerary subunits COX4I1 (or COX4I2), COX5A, COX5B, COX6A2 (or COX6A1), COX6B1 (or COX6B2), COX6C, COX7A1 (or COX7A2), COX7B, COX7C, COX8B and NDUFA4, which are encoded in the nuclear genome. The complex exists as a monomer or a dimer and forms supercomplexes (SCs) in the inner mitochondrial membrane with NADH-ubiquinone oxidoreductase (complex I, CI) and ubiquinol-cytochrome c oxidoreductase (cytochrome b-c1 complex, complex III, CIII), resulting in different assemblies (supercomplex SCI(1)III(2)IV(1) and megacomplex MCI(2)III(2)IV(2)). Interacts with PET100.

The protein resides in the mitochondrion inner membrane. Its pathway is energy metabolism; oxidative phosphorylation. In terms of biological role, component of the cytochrome c oxidase, the last enzyme in the mitochondrial electron transport chain which drives oxidative phosphorylation. The respiratory chain contains 3 multisubunit complexes succinate dehydrogenase (complex II, CII), ubiquinol-cytochrome c oxidoreductase (cytochrome b-c1 complex, complex III, CIII) and cytochrome c oxidase (complex IV, CIV), that cooperate to transfer electrons derived from NADH and succinate to molecular oxygen, creating an electrochemical gradient over the inner membrane that drives transmembrane transport and the ATP synthase. Cytochrome c oxidase is the component of the respiratory chain that catalyzes the reduction of oxygen to water. Electrons originating from reduced cytochrome c in the intermembrane space (IMS) are transferred via the dinuclear copper A center (CU(A)) of subunit 2 and heme A of subunit 1 to the active site in subunit 1, a binuclear center (BNC) formed by heme A3 and copper B (CU(B)). The BNC reduces molecular oxygen to 2 water molecules using 4 electrons from cytochrome c in the IMS and 4 protons from the mitochondrial matrix. The protein is Cytochrome c oxidase subunit 7A2, mitochondrial (COX7A2) of Bos taurus (Bovine).